Reading from the N-terminus, the 330-residue chain is MTLIVTGAAGFIGANLVKALNERGETRIIAVDNLTRADKFKNLVDCEIDDYLDKTEFVERFARGDFGKVRAVFHEGACSDTMETDGRYMMDNNFRYSRAVLDACLAQGAQFLYASSAAIYGGSSRFVEEREVEAPLNVYGYSKFLFDQVIRRVMPGAKSQIAGFRYFNVYGPRESHKGRMASVAFHNFNQFRAEGKVKLFGEYSGYGPGEQTRDFVSVEDVAKVNLYFFDHPEKSGIFNLGTGRAQPFNDIAATVVNTLRALEGQPALTLAEQVEQGLVEYVPFPDALRGKYQCFTQADQTKLRAAGYDAPFLTVQEGVDRYVRWLFGQL.

NADP(+)-binding positions include 11 to 12, 32 to 33, Lys-39, Lys-54, 75 to 79, and Asn-92; these read FI, DN, and EGACS. Catalysis depends on Tyr-139, which acts as the Proton acceptor. Lys-143 contributes to the NADP(+) binding site. Position 168 (Asn-168) interacts with substrate. Val-169 and Lys-177 together coordinate NADP(+). Lys-177 functions as the Proton acceptor in the catalytic mechanism. Substrate is bound by residues Arg-179, His-186, 200–203, Arg-213, and Tyr-292; that span reads FGEY.

Belongs to the NAD(P)-dependent epimerase/dehydratase family. HldD subfamily. Homopentamer. NADP(+) serves as cofactor.

The catalysed reaction is ADP-D-glycero-beta-D-manno-heptose = ADP-L-glycero-beta-D-manno-heptose. It functions in the pathway nucleotide-sugar biosynthesis; ADP-L-glycero-beta-D-manno-heptose biosynthesis; ADP-L-glycero-beta-D-manno-heptose from D-glycero-beta-D-manno-heptose 7-phosphate: step 4/4. Its function is as follows. Catalyzes the interconversion between ADP-D-glycero-beta-D-manno-heptose and ADP-L-glycero-beta-D-manno-heptose via an epimerization at carbon 6 of the heptose. This chain is ADP-L-glycero-D-manno-heptose-6-epimerase, found in Burkholderia thailandensis (strain ATCC 700388 / DSM 13276 / CCUG 48851 / CIP 106301 / E264).